Consider the following 105-residue polypeptide: Flagellar transcriptional regulator FlhD (105 aa).

Belongs to the FlhD family. As to quaternary structure, homodimer; disulfide-linked. Forms a heterohexamer composed of two FlhC and four FlhD subunits. Each FlhC binds a FlhD dimer, forming a heterotrimer, and a hexamer assembles by dimerization of two heterotrimers.

It localises to the cytoplasm. Functions in complex with FlhC as a master transcriptional regulator that regulates transcription of several flagellar and non-flagellar operons by binding to their promoter region. Activates expression of class 2 flagellar genes, including fliA, which is a flagellum-specific sigma factor that turns on the class 3 genes. Also regulates genes whose products function in a variety of physiological pathways. This Ralstonia pickettii (strain 12J) protein is Flagellar transcriptional regulator FlhD.